The primary structure comprises 443 residues: Methyl-coenzyme M reductase I subunit beta (443 aa).

Residue Y367 coordinates coenzyme M. A coenzyme B-binding site is contributed by G369.

Belongs to the methyl-coenzyme M reductase beta subunit family. MCR is a hexamer of two alpha, two beta, and two gamma chains, forming a dimer of heterotrimers. Requires coenzyme F430 as cofactor.

Its subcellular location is the cytoplasm. The catalysed reaction is coenzyme B + methyl-coenzyme M = methane + coenzyme M-coenzyme B heterodisulfide. The protein operates within one-carbon metabolism; methyl-coenzyme M reduction; methane from methyl-coenzyme M: step 1/1. Functionally, component of the methyl-coenzyme M reductase (MCR) I that catalyzes the reductive cleavage of methyl-coenzyme M (CoM-S-CH3 or 2-(methylthio)ethanesulfonate) using coenzyme B (CoB or 7-mercaptoheptanoylthreonine phosphate) as reductant which results in the production of methane and the mixed heterodisulfide of CoB and CoM (CoM-S-S-CoB). This is the final step in methanogenesis. In Methanothermobacter thermautotrophicus (strain ATCC 29096 / DSM 1053 / JCM 10044 / NBRC 100330 / Delta H) (Methanobacterium thermoautotrophicum), this protein is Methyl-coenzyme M reductase I subunit beta (mcrB).